The chain runs to 141 residues: Hemoglobin subunit alpha (141 aa).

One can recognise a Globin domain in the interval 1 to 141; sequence VLSPADKSNV…VSTVLVSKYR (141 aa). The residue at position 3 (serine 3) is a Phosphoserine. N6-succinyllysine occurs at positions 7 and 11. Lysine 16 bears the N6-acetyllysine; alternate mark. Lysine 16 is subject to N6-succinyllysine; alternate. Phosphotyrosine is present on tyrosine 24. Residue serine 35 is modified to Phosphoserine. Lysine 40 bears the N6-succinyllysine mark. A Phosphoserine modification is found at serine 49. Histidine 58 is a binding site for O2. A heme b-binding site is contributed by histidine 87. Serine 102 carries the post-translational modification Phosphoserine. A Phosphothreonine modification is found at threonine 108. The residue at position 124 (serine 124) is a Phosphoserine. Threonine 134 carries the phosphothreonine modification. At serine 138 the chain carries Phosphoserine.

This sequence belongs to the globin family. Heterotetramer of two alpha chains and two beta chains. In terms of tissue distribution, red blood cells.

Its function is as follows. Involved in oxygen transport from the lung to the various peripheral tissues. Hemopressin acts as an antagonist peptide of the cannabinoid receptor CNR1. Hemopressin-binding efficiently blocks cannabinoid receptor CNR1 and subsequent signaling. The sequence is that of Hemoglobin subunit alpha (HBA) from Chalinolobus morio (Chocolate-wattled bat).